Here is a 273-residue protein sequence, read N- to C-terminus: Formamidopyrimidine-DNA glycosylase (273 aa).

Pro2 serves as the catalytic Schiff-base intermediate with DNA. Glu3 serves as the catalytic Proton donor. Residue Lys57 is the Proton donor; for beta-elimination activity of the active site. DNA contacts are provided by His91, Arg110, and Lys151. The segment at 236–270 (QVYGRKDEACNDCGTIIEAKVIGQRNSYFCPHCQM) adopts an FPG-type zinc-finger fold. Residue Arg260 is the Proton donor; for delta-elimination activity of the active site.

The protein belongs to the FPG family. In terms of assembly, monomer. Requires Zn(2+) as cofactor.

The catalysed reaction is Hydrolysis of DNA containing ring-opened 7-methylguanine residues, releasing 2,6-diamino-4-hydroxy-5-(N-methyl)formamidopyrimidine.. It carries out the reaction 2'-deoxyribonucleotide-(2'-deoxyribose 5'-phosphate)-2'-deoxyribonucleotide-DNA = a 3'-end 2'-deoxyribonucleotide-(2,3-dehydro-2,3-deoxyribose 5'-phosphate)-DNA + a 5'-end 5'-phospho-2'-deoxyribonucleoside-DNA + H(+). In terms of biological role, involved in base excision repair of DNA damaged by oxidation or by mutagenic agents. Acts as a DNA glycosylase that recognizes and removes damaged bases. Has a preference for oxidized purines, such as 7,8-dihydro-8-oxoguanine (8-oxoG). Has AP (apurinic/apyrimidinic) lyase activity and introduces nicks in the DNA strand. Cleaves the DNA backbone by beta-delta elimination to generate a single-strand break at the site of the removed base with both 3'- and 5'-phosphates. This chain is Formamidopyrimidine-DNA glycosylase, found in Actinobacillus pleuropneumoniae serotype 5b (strain L20).